The following is a 319-amino-acid chain: tRNA U34 carboxymethyltransferase (319 aa).

Residues K88, W102, K107, G126, 176–177 (LE), M192, Y196, and R311 each bind carboxy-S-adenosyl-L-methionine.

Belongs to the class I-like SAM-binding methyltransferase superfamily. CmoB family. Homotetramer.

The enzyme catalyses carboxy-S-adenosyl-L-methionine + 5-hydroxyuridine(34) in tRNA = 5-carboxymethoxyuridine(34) in tRNA + S-adenosyl-L-homocysteine + H(+). Catalyzes carboxymethyl transfer from carboxy-S-adenosyl-L-methionine (Cx-SAM) to 5-hydroxyuridine (ho5U) to form 5-carboxymethoxyuridine (cmo5U) at position 34 in tRNAs. In Pseudomonas syringae pv. syringae (strain B728a), this protein is tRNA U34 carboxymethyltransferase.